Here is a 98-residue protein sequence, read N- to C-terminus: Large ribosomal subunit protein uL23 (98 aa).

It belongs to the universal ribosomal protein uL23 family. In terms of assembly, part of the 50S ribosomal subunit. Contacts protein L29, and trigger factor when it is bound to the ribosome.

In terms of biological role, one of the early assembly proteins it binds 23S rRNA. One of the proteins that surrounds the polypeptide exit tunnel on the outside of the ribosome. Forms the main docking site for trigger factor binding to the ribosome. In Maricaulis maris (strain MCS10) (Caulobacter maris), this protein is Large ribosomal subunit protein uL23.